The chain runs to 225 residues: Viral late gene transcription factor 3 (225 aa).

Residues 7 to 27 (CSNCKHNGLITESNHEFCIFC) fold into a zinc finger.

Belongs to the nucleo-cytoplasmic large DNA viruses (NCLDVs) VLTF-3 family. Interacts with the late transcription elongation factor H5/VLTF-4. Interacts with the late transcription factors VLTF-1.

Acts with RNA polymerase to initiate transcription from late gene promoters. The polypeptide is Viral late gene transcription factor 3 (VLTF3) (Fowlpox virus (strain NVSL) (FPV)).